A 1893-amino-acid chain; its full sequence is MMDLVLEEDVTVPGTLSGCSGLVPSVPDDLDGINPNAGLGNGLLPNVSEETVSPTRARNMKDFENQITELKKENFNLKLRIYFLEERMQQEFHGPTEHIYKTNIELKVEVESLKRELQEREQLLIKASKAVESLAEAGGSEIQRVKEDARKKVQQVEDLLTKRILLLEKDVTAAQAELEKAFAGTETEKALRLRLESKLSEMKKMHEGDLAMALVLDEKDRLIEELKLSLKSKEALIQCLKEEKSQMACPDENVSSGELRGLCAAPREEKERETEAAQMEHQKERNSFEERIQALEEDLREKEREIATEKKNSLKRDKAIQGLTMALKSKEKKVEELNSEIEKLSAAFAKAREALQKAQTQEFQGSEDYETALSGKEALSAALRSQNLTKSTENHRLRRSIKKITQELSDLQQERERLEKDLEEAHREKSKGDCTIRDLRNEVEKLRNEVNEREKAMENRYKSLLSESNKKLHNQEQVIKHLTESTNQKDVLLQKFNEKDLEVIQQNCYLMAAEDLELRSEGLITEKCSSQQPPGSKTIFSKEKKQSSDYEELIQVLKKEQDIYTHLVKSLQESDSINNLQAELNKIFALRKQLEQDVLSYQNLRKTLEEQISEIRRREEESFSLYSDQTSYLSICLEENNRFQVEHFSQEELKKKVSDLIQLVKELYTDNQHLKKTIFDLSCMGFQGNGFPDRLASTEQTELLASKEDEDTIKIGEDDEINFLSDQHLQQSNEIMKDLSKGGCKNGYLRHTESKISDCDGAHAPGCLEEGAFINLLAPLFNEKATLLLESRPDLLKVVRELLLGQLFLTEQEVSGEHLDGKTEKTPKQKGELVHFVQTNSFSKPHDELKLSCEAQLVKAGEVPKVGLKDASVQTVATEGDLLRFKHEATREAWEEKPINTALSAEHRPENLHGVPGWQAALLSLPGITNREAKKSRLPILIKPSRSLGNMYRLPATQEVVTQLQSQILELQGELKEFKTCNKQLHQKLILAEAVMEGRPTPDKTLLNAQPPVGAAYQDSPGEQKGIKTTSSVWRDKEMDSDQQRSYEIDSEICPPDDLASLPSCKENPEDVLSPTSVATYLSSKSQPSAKVSVMGTDQSESINTSNETEYLKQKIHDLETELEGYQNFIFQLQKHSQCSEAIITVLCGTEGAQDGLSKPKNGSDGEEMTFSSLHQVRYVKHVKILGPLAPEMIDSRVLENLKQQLEEQEYKLQKEQNLNMQLFSEIHNLQNKFRDLSPPRYDSLVQSQARELSLQRQQIKDGHGICVISRQHMNTMIKAFEELLQASDVDYCVAEGFQEQLNQCAELLEKLEKLFLNGKSVGVEMNTQNELMERIEEDNLTYQHLLPESPEPSASHALSDYETSEKSFFSRDQKQDNETEKTSVMVNSFSQDLLMEHIQEIRTLRKRLEESIKTNEKLRKQLERQGSEFVQGSTSIFASGSELHSSLTSEIHFLRKQNQALNAMLIKGSRDKQKENDKLRESLSRKTVSLEHLQREYASVKEENERLQKEGSEKERHNQQLIQEVRCSGQELSRVQEEVKLRQQLLSQNDKLLQSLRVELKAYEKLDEEHRRLREASGEGWKGQDPFRDLHSLLMEIQALRLQLERSIETSSTLQSRLKEQLARGAEKAQEGALTLAVQAVSIPEVPLQPDKHDGDKYPMESDNSFDLFDSSQAVTPKSVSETPPLSGNDTDSLSCDSGSSATSTPCVSRLVTGHHLWASKNGRHVLGLIEDYEALLKQISQGQRLLAEMDIQTQEAPSSTSQELGTKGPHPAPLSKFVSSVSTAKLTLEEAYRRLKLLWRVSLPEDGQCPLHCEQIGEMKAEVTKLHKKLFEQEKKLQNTMKLLQLSKRQEKVIFDQLVVTHKILRKARGNLELRPGGAHPGTCSPSRPGS.

The segment at Thr51–Gly94 is CM1 motif; interacts with the gTuRC. The interval Arg58–Glu196 is interaction with NCKAP5L. Residue Ser547 is modified to Phosphoserine. An interaction with MAPRE1 region spans residues Pro926–Glu1208. The residue at position 1001 (Thr1001) is a Phosphothreonine. Disordered stretches follow at residues Ala1015–Asp1071 and Ser1084–Thr1105. The span at Trp1034–Glu1048 shows a compositional bias: basic and acidic residues. Ser1238 is modified (phosphoserine). Positions Leu1347–Glu1381 are disordered. Residues Thr1364–Glu1381 are compositionally biased toward basic and acidic residues. The residue at position 1490 (Ser1490) is a Phosphoserine. 2 stretches are compositionally biased toward basic and acidic residues: residues Ser1500–Asn1519 and Pro1651–Met1661. Disordered stretches follow at residues Ser1500 to Gln1521, Glu1646 to Thr1706, and Gln1754 to Ala1774. Ser1663 and Ser1666 each carry phosphoserine. 2 stretches are compositionally biased toward polar residues: residues Ser1663–Thr1706 and Gln1754–Leu1766. Positions His1726–Thr1768 are interaction with CDK5R1. An interaction with PCNT and AKAP9 region spans residues His1726–Ser1893. Positions Val1861–Ala1870 are required for centrosomal attachment, Golgi localization and CALM1 interaction. Ser1893 is subject to Phosphoserine.

Homodimer. Interacts with CDK5R1 (p35 form). CDK5RAP1, CDK5RAP2 and CDK5RAP3 show competitive binding to CDK5R1. May form a complex with CDK5R1 and CDK5. Interacts with pericentrin/PCNT; the interaction is leading to centrosomal and Golgi localization of CDK5RAP2 and PCNT. Interacts with AKAP9; the interaction targets CDK5RAP2 and AKAP9 to Golgi apparatus. Interacts with MAPRE1; the interaction is direct and targets CDK5RAP2 and EB1/MAPRE1 to microtubule plus ends. Interacts with TUBG1; the interaction is leading to the centrosomal localization of CDK5RAP2 and TUBG1. Interacts with TUBGCP3. Interacts with CALM1. Interacts with CDC20. Interacts with CEP68; degradation of CEP68 in early mitosis leads to removal of CDK5RAP2 from the centrosome which promotes centriole disengagement and subsequent centriole separation. Interacts with NCKAP5L. Forms a pericentrosomal complex with AKAP9, MAPRE1 and PDE4DIP isoform 13/MMG8/SMYLE; within this complex, MAPRE1 binding to CDK5RAP2 may be mediated by PDE4DIP. Interacts with LGALS3BP; this interaction may connect the pericentrosomal complex to the gamma-tubulin ring complex (gTuRC) to promote microtubule assembly and acetylation. Interacts with CCDC66. Associates (via CM1 motif) with TUBGCP2 of the gTuRC; the interaction plays a role in gTuRC activation. Phosphorylated in vitro by CDK5. Widely expressed. Expressed in heart, brain, placenta, lung, liver, skeletal muscle, kidney and pancreas.

It is found in the cytoplasm. Its subcellular location is the cytoskeleton. The protein resides in the microtubule organizing center. The protein localises to the centrosome. It localises to the golgi apparatus. In terms of biological role, potential regulator of CDK5 activity via its interaction with CDK5R1. Negative regulator of centriole disengagement (licensing) which maintains centriole engagement and cohesion. Involved in regulation of mitotic spindle orientation. Plays a role in the spindle checkpoint activation by acting as a transcriptional regulator of both BUBR1 and MAD2 promoter. Together with EB1/MAPRE1, may promote microtubule polymerization, bundle formation, growth and dynamics at the plus ends. Regulates centrosomal maturation by recruitment of the gamma-tubulin ring complex (gTuRC) onto centrosomes. In complex with PDE4DIP isoform 13/MMG8/SMYLE, MAPRE1 and AKAP9, contributes to microtubules nucleation and extension from the centrosome to the cell periphery. Required for the recruitment of AKAP9 to centrosomes. Plays a role in neurogenesis. The protein is CDK5 regulatory subunit-associated protein 2 (CDK5RAP2) of Homo sapiens (Human).